Consider the following 366-residue polypeptide: tRNA/tmRNA (uracil-C(5))-methyltransferase (366 aa).

Gln189, Tyr217, Asn222, Glu238, and Asp298 together coordinate S-adenosyl-L-methionine. The Nucleophile role is filled by Cys323. Glu357 acts as the Proton acceptor in catalysis.

The protein belongs to the class I-like SAM-binding methyltransferase superfamily. RNA M5U methyltransferase family. TrmA subfamily.

The catalysed reaction is uridine(54) in tRNA + S-adenosyl-L-methionine = 5-methyluridine(54) in tRNA + S-adenosyl-L-homocysteine + H(+). It catalyses the reaction uridine(341) in tmRNA + S-adenosyl-L-methionine = 5-methyluridine(341) in tmRNA + S-adenosyl-L-homocysteine + H(+). Functionally, dual-specificity methyltransferase that catalyzes the formation of 5-methyluridine at position 54 (m5U54) in all tRNAs, and that of position 341 (m5U341) in tmRNA (transfer-mRNA). The sequence is that of tRNA/tmRNA (uracil-C(5))-methyltransferase from Shewanella putrefaciens (strain CN-32 / ATCC BAA-453).